We begin with the raw amino-acid sequence, 294 residues long: Cytidine deaminase (294 aa).

CMP/dCMP-type deaminase domains follow at residues 48 to 168 (NDDE…FGPK) and 187 to 294 (DNTS…RVTL). 89 to 91 (NME) is a binding site for substrate. His102 contacts Zn(2+). Glu104 (proton donor) is an active-site residue. Zn(2+) contacts are provided by Cys129 and Cys132.

This sequence belongs to the cytidine and deoxycytidylate deaminase family. Homodimer. Requires Zn(2+) as cofactor.

The enzyme catalyses cytidine + H2O + H(+) = uridine + NH4(+). It carries out the reaction 2'-deoxycytidine + H2O + H(+) = 2'-deoxyuridine + NH4(+). Functionally, this enzyme scavenges exogenous and endogenous cytidine and 2'-deoxycytidine for UMP synthesis. In Proteus mirabilis (strain HI4320), this protein is Cytidine deaminase.